The following is a 108-amino-acid chain: MLKTTLLFFVTALCEIIGCFLPWLWIKRGASVWWLLPAAASLALFVWLLTLHPAASGRVYAAYGGVYVCTALLWLRVVDGVRLTVYDWCGALIALCGMLIIVVGWGRT.

The Periplasmic segment spans residues 1-5 (MLKTT). The chain crosses the membrane as a helical span at residues 6-26 (LLFFVTALCEIIGCFLPWLWI). At 27-30 (KRGA) the chain is on the cytoplasmic side. Residues 31 to 51 (SVWWLLPAAASLALFVWLLTL) form a helical membrane-spanning segment. Residues 52–60 (HPAASGRVY) lie on the Periplasmic side of the membrane. The helical transmembrane segment at 61-81 (AAYGGVYVCTALLWLRVVDGV) threads the bilayer. Residues 82–84 (RLT) are Cytoplasmic-facing. The helical transmembrane segment at 85–105 (VYDWCGALIALCGMLIIVVGW) threads the bilayer. Residues 106–108 (GRT) are Periplasmic-facing.

Belongs to the UPF0060 family.

It localises to the cell inner membrane. This is UPF0060 membrane protein YnfA from Salmonella paratyphi A (strain ATCC 9150 / SARB42).